Consider the following 340-residue polypeptide: GTPase Obg (340 aa).

Positions 1–159 constitute an Obg domain; that stretch reads MKFLDQAKVY…RTLWLRLKLI (159 aa). Residues 160–327 form the OBG-type G domain; sequence ADAGIIGLPN…LLRAGAHIIE (168 aa). GTP contacts are provided by residues 166 to 173, 191 to 195, 212 to 215, 279 to 282, and 308 to 310; these read GLPNAGKS, FTTLY, DIPG, SQID, and SAV. Serine 173 and threonine 193 together coordinate Mg(2+).

It belongs to the TRAFAC class OBG-HflX-like GTPase superfamily. OBG GTPase family. Monomer. It depends on Mg(2+) as a cofactor.

The protein localises to the cytoplasm. Functionally, an essential GTPase which binds GTP, GDP and possibly (p)ppGpp with moderate affinity, with high nucleotide exchange rates and a fairly low GTP hydrolysis rate. Plays a role in control of the cell cycle, stress response, ribosome biogenesis and in those bacteria that undergo differentiation, in morphogenesis control. The polypeptide is GTPase Obg (Bartonella henselae (strain ATCC 49882 / DSM 28221 / CCUG 30454 / Houston 1) (Rochalimaea henselae)).